We begin with the raw amino-acid sequence, 1374 residues long: DNA-directed RNA polymerase subunit beta' (1374 aa).

The interval 1 to 47 is disordered; it reads MTSTSPKSRKPSTKTTKSKSKSKSKSKAAKAAAASASPALARTPPQF. Basic residues predominate over residues 7–28; the sequence is KSRKPSTKTTKSKSKSKSKSKA. Positions 29 to 45 are enriched in low complexity; the sequence is AKAAAASASPALARTPP. Positions 258, 325, 332, and 335 each coordinate Zn(2+). The interval 1343-1374 is disordered; sequence VRPTGENELEEEQLPDPSALEGLQQEGLLTEE. A compositionally biased stretch (low complexity) spans 1362–1374; that stretch reads LEGLQQEGLLTEE.

Belongs to the RNA polymerase beta' chain family. RpoC2 subfamily. In terms of assembly, in cyanobacteria the RNAP catalytic core is composed of 2 alpha, 1 beta, 1 beta', 1 gamma and 1 omega subunit. When a sigma factor is associated with the core the holoenzyme is formed, which can initiate transcription. It depends on Zn(2+) as a cofactor.

It carries out the reaction RNA(n) + a ribonucleoside 5'-triphosphate = RNA(n+1) + diphosphate. Functionally, DNA-dependent RNA polymerase catalyzes the transcription of DNA into RNA using the four ribonucleoside triphosphates as substrates. The sequence is that of DNA-directed RNA polymerase subunit beta' from Prochlorococcus marinus (strain MIT 9303).